Here is a 163-residue protein sequence, read N- to C-terminus: Putative 4-hydroxy-4-methyl-2-oxoglutarate aldolase (163 aa).

Residues 76 to 79 (GDMI) and Arg-98 each bind substrate. Asp-99 is an a divalent metal cation binding site.

It belongs to the class II aldolase/RraA-like family. In terms of assembly, homotrimer. Requires a divalent metal cation as cofactor.

The catalysed reaction is 4-hydroxy-4-methyl-2-oxoglutarate = 2 pyruvate. The enzyme catalyses oxaloacetate + H(+) = pyruvate + CO2. In terms of biological role, catalyzes the aldol cleavage of 4-hydroxy-4-methyl-2-oxoglutarate (HMG) into 2 molecules of pyruvate. Also contains a secondary oxaloacetate (OAA) decarboxylase activity due to the common pyruvate enolate transition state formed following C-C bond cleavage in the retro-aldol and decarboxylation reactions. The chain is Putative 4-hydroxy-4-methyl-2-oxoglutarate aldolase from Pseudomonas fluorescens (strain Pf0-1).